The following is a 384-amino-acid chain: Spermidine/putrescine import ATP-binding protein PotA (384 aa).

The ABC transporter domain occupies 6–238 (IAFQNVSKVF…PINHFVATFI (233 aa)). 40–47 (GASGSGKS) contributes to the ATP binding site.

It belongs to the ABC transporter superfamily. Spermidine/putrescine importer (TC 3.A.1.11.1) family. The complex is composed of two ATP-binding proteins (PotA), two transmembrane proteins (PotB and PotC) and a solute-binding protein (PotD).

It is found in the cell membrane. The enzyme catalyses ATP + H2O + polyamine-[polyamine-binding protein]Side 1 = ADP + phosphate + polyamineSide 2 + [polyamine-binding protein]Side 1.. In terms of biological role, part of the ABC transporter complex PotABCD involved in spermidine/putrescine import. Responsible for energy coupling to the transport system. This is Spermidine/putrescine import ATP-binding protein PotA from Streptococcus thermophilus (strain ATCC BAA-250 / LMG 18311).